A 169-amino-acid polypeptide reads, in one-letter code: Peptide deformylase 1 (169 aa).

The Fe cation site is built by cysteine 93 and histidine 135. Glutamate 136 is an active-site residue. Histidine 139 is a binding site for Fe cation.

It belongs to the polypeptide deformylase family. Requires Fe(2+) as cofactor.

The catalysed reaction is N-terminal N-formyl-L-methionyl-[peptide] + H2O = N-terminal L-methionyl-[peptide] + formate. Functionally, removes the formyl group from the N-terminal Met of newly synthesized proteins. Requires at least a dipeptide for an efficient rate of reaction. N-terminal L-methionine is a prerequisite for activity but the enzyme has broad specificity at other positions. In Corynebacterium glutamicum (strain ATCC 13032 / DSM 20300 / JCM 1318 / BCRC 11384 / CCUG 27702 / LMG 3730 / NBRC 12168 / NCIMB 10025 / NRRL B-2784 / 534), this protein is Peptide deformylase 1.